The following is a 542-amino-acid chain: Major facilitator superfamily domain-containing protein 6-like (542 aa).

11 helical membrane passes run 46–66 (LGLSAAMIGIIMASKHLLALL), 89–109 (LLSSALVVLPLLLFPSAGILV), 198–218 (MFFLVLLVTALWEFVAVPLEW), 246–266 (VGAAFGSCLVGVLVTNLFCRI), 272–292 (FYSYTVLMILTVPASALLPIY), 321–341 (VTVILTGMVTSAVSDFLLWLM), 352–372 (GICLALAHLSHTGFSPIAGPL), 381–401 (WMLVLAVVGLAMQCLYYSFLW), 404–424 (WAVMPAQLLAGFSTGALWWSV), 444–464 (FEAFSLDMGAALGSLIAGFVV), and 469–489 (VNVLFQGASVMLAVWSSALAV).

The protein belongs to the major facilitator superfamily. MFSD6 family.

The protein localises to the membrane. The chain is Major facilitator superfamily domain-containing protein 6-like (mfsd6l) from Danio rerio (Zebrafish).